The sequence spans 407 residues: Steroid 3-ketoacyl-CoA thiolase FadA6 (407 aa).

Catalysis depends on Cys-110, which acts as the Acyl-thioester intermediate. Residues Gln-178, 237 to 239 (RES), and Ser-262 each bind CoA. Catalysis depends on proton acceptor residues His-363 and Cys-393. Position 395 (Gly-395) interacts with substrate.

The protein belongs to the thiolase-like superfamily. Thiolase family.

The catalysed reaction is an acyl-CoA + acetyl-CoA = a 3-oxoacyl-CoA + CoA. It catalyses the reaction 6-methyl-3,7-dioxodecanedioyl-CoA + CoA = 4-methyl-5-oxo-octanedioyl-CoA + acetyl-CoA. The protein operates within steroid metabolism; cholesterol degradation. May be involved in the final steps of cholesterol and steroid degradation. Catalyzes the formation of 4-methyl-5-oxo-octanedioyl-CoA (MOODA-CoA) and acetyl-CoA from 6-methyl-3,7-dioxodecanedioyl-CoA (MeDODA-CoA) and coenzyme A. This Mycobacterium tuberculosis (strain ATCC 25618 / H37Rv) protein is Steroid 3-ketoacyl-CoA thiolase FadA6.